A 71-amino-acid chain; its full sequence is Beta-defensin 25 (71 aa).

Residues 1–22 (MAKWILLIVALLVLSHVPPGST) form the signal peptide. 3 disulfides stabilise this stretch: Cys-27/Cys-54, Cys-34/Cys-48, and Cys-38/Cys-55.

The protein belongs to the beta-defensin family.

Its subcellular location is the secreted. Functionally, has antibacterial activity. The chain is Beta-defensin 25 (Defb25) from Mus musculus (Mouse).